We begin with the raw amino-acid sequence, 503 residues long: ATP synthase subunit alpha (503 aa).

171–178 serves as a coordination point for ATP; it reads DRQTGKTA.

Belongs to the ATPase alpha/beta chains family. F-type ATPases have 2 components, CF(1) - the catalytic core - and CF(0) - the membrane proton channel. CF(1) has five subunits: alpha(3), beta(3), gamma(1), delta(1), epsilon(1). CF(0) has four main subunits: a(1), b(1), b'(1) and c(9-12).

Its subcellular location is the cellular thylakoid membrane. The enzyme catalyses ATP + H2O + 4 H(+)(in) = ADP + phosphate + 5 H(+)(out). In terms of biological role, produces ATP from ADP in the presence of a proton gradient across the membrane. The alpha chain is a regulatory subunit. This chain is ATP synthase subunit alpha, found in Synechococcus sp. (strain PCC 6716).